Here is a 313-residue protein sequence, read N- to C-terminus: HPr kinase/phosphorylase (313 aa).

Catalysis depends on residues histidine 140 and lysine 161. 155–162 provides a ligand contact to ATP; it reads GNSGAGKS. Serine 162 lines the Mg(2+) pocket. Catalysis depends on aspartate 179, which acts as the Proton acceptor; for phosphorylation activity. Proton donor; for dephosphorylation activity. The tract at residues 203–212 is important for the catalytic mechanism of both phosphorylation and dephosphorylation; it reads IEVRGLGILN. Glutamate 204 serves as a coordination point for Mg(2+). The active site involves arginine 246. Positions 267–272 are important for the catalytic mechanism of dephosphorylation; that stretch reads PVAAGR.

This sequence belongs to the HPrK/P family. As to quaternary structure, homohexamer. Requires Mg(2+) as cofactor.

The enzyme catalyses [HPr protein]-L-serine + ATP = [HPr protein]-O-phospho-L-serine + ADP + H(+). It catalyses the reaction [HPr protein]-O-phospho-L-serine + phosphate + H(+) = [HPr protein]-L-serine + diphosphate. Functionally, catalyzes the ATP- as well as the pyrophosphate-dependent phosphorylation of a specific serine residue in HPr, a phosphocarrier protein of the phosphoenolpyruvate-dependent sugar phosphotransferase system (PTS). HprK/P also catalyzes the pyrophosphate-producing, inorganic phosphate-dependent dephosphorylation (phosphorolysis) of seryl-phosphorylated HPr (P-Ser-HPr). This Aromatoleum aromaticum (strain DSM 19018 / LMG 30748 / EbN1) (Azoarcus sp. (strain EbN1)) protein is HPr kinase/phosphorylase.